The chain runs to 328 residues: Malate dehydrogenase (328 aa).

12-18 (GAAGQIG) lines the NAD(+) pocket. Substrate is bound by residues arginine 95 and arginine 101. NAD(+) is bound by residues asparagine 108, glutamine 115, and 132 to 134 (VGN). Residues asparagine 134 and arginine 165 each contribute to the substrate site. Catalysis depends on histidine 190, which acts as the Proton acceptor.

The protein belongs to the LDH/MDH superfamily. MDH type 2 family.

It catalyses the reaction (S)-malate + NAD(+) = oxaloacetate + NADH + H(+). Its function is as follows. Catalyzes the reversible oxidation of malate to oxaloacetate. This Polaromonas sp. (strain JS666 / ATCC BAA-500) protein is Malate dehydrogenase.